A 116-amino-acid chain; its full sequence is Staphylococcal complement inhibitor (116 aa).

The N-terminal stretch at 1-31 is a signal peptide; the sequence is MKIRKSILAGTLAIVLASPLVTNLDKNEAQA. An essential for activity region spans residues 62 to 79; the sequence is LATGSLNTYYKRTIKISG.

This sequence belongs to the SCIN family.

The protein localises to the secreted. Its function is as follows. Involved in countering the first line of host defense mechanisms. Efficiently inhibits opsonization, phagocytosis and killing of S.aureus by human neutrophils. Acts by binding and stabilizing human C3 convertases (C4b2a and C3bBb), leading to their inactivation. The convertases are no longer able to cleave complement C3, therefore preventing further C3b deposition on the bacterial surface and phagocytosis of the bacterium. Also prevents C5a-induced neutrophil responses. In Staphylococcus aureus (strain Mu50 / ATCC 700699), this protein is Staphylococcal complement inhibitor (scn).